A 1067-amino-acid chain; its full sequence is Protein CLEC16A homolog (1067 aa).

One can recognise an FPL domain in the interval 50–199 (LRCIAEILIW…AVRTISLNVY (150 aa)). A helical membrane pass occupies residues 333-353 (SIVALFLLSLVFLVVSHAPLV). Residues 409 to 418 (SSSSYALSED) are compositionally biased toward low complexity. Disordered stretches follow at residues 409–434 (SSSS…LDSQ), 837–861 (ASSS…PMFS), 876–993 (SNSA…SRSH), and 1037–1067 (QSSE…IETV). Residues 421 to 432 (VESSSPATTELD) are compositionally biased toward polar residues. Residues 876–888 (SNSAGVSRTQMAP) are compositionally biased toward polar residues. A compositionally biased stretch (basic and acidic residues) spans 917–926 (RADHSDRERS). Over residues 927 to 947 (PSVSMGSHSSSQSRENSQPRS) the composition is skewed to low complexity. The span at 951 to 974 (RSRESSPRMPRPRSEEIPLEDFQH) shows a compositional bias: basic and acidic residues. Residues 975–993 (SRNNSPHSRGNPSPASRSH) show a composition bias toward polar residues. Positions 1057–1067 (EGRRRGAIETV) are enriched in basic and acidic residues.

The protein belongs to the CLEC16A/gop-1 family. In terms of assembly, interacts with the class C Vps-HOPS complex components; Car, Dor and Vps16a.

It localises to the cytoplasmic vesicle. The protein resides in the autophagosome membrane. It is found in the late endosome membrane. Its subcellular location is the golgi apparatus membrane. Its function is as follows. Required for mitophagy, autophagy and endosome maturation, possibly by acting in multiple membrane trafficking pathways. Required for endosome trafficking and maturation. Functions with the class C Vps-HOPS complex member Vps16a to promote endosomal maturation into degradative late endosomes and lysosomes. In response to starvation, functions at an early stage of autophagy to promote autophagosome growth and efficient autophagy. Essential for the recruitment of lva-positive Golgi elements to autophagosomes. Likely to function by promoting membrane traffic from the Golgi complex to the developing autophagosomes. Also regulates synaptic growth at the neuromuscular junctions (NMJ) by down-regulating BMP signaling. The sequence is that of Protein CLEC16A homolog from Drosophila melanogaster (Fruit fly).